Here is a 347-residue protein sequence, read N- to C-terminus: N-acetyl-gamma-glutamyl-phosphate reductase (347 aa).

The active site involves cysteine 150.

This sequence belongs to the NAGSA dehydrogenase family. Type 1 subfamily.

It is found in the cytoplasm. The enzyme catalyses N-acetyl-L-glutamate 5-semialdehyde + phosphate + NADP(+) = N-acetyl-L-glutamyl 5-phosphate + NADPH + H(+). It participates in amino-acid biosynthesis; L-arginine biosynthesis; N(2)-acetyl-L-ornithine from L-glutamate: step 3/4. Functionally, catalyzes the NADPH-dependent reduction of N-acetyl-5-glutamyl phosphate to yield N-acetyl-L-glutamate 5-semialdehyde. The sequence is that of N-acetyl-gamma-glutamyl-phosphate reductase from Leifsonia xyli subsp. xyli (strain CTCB07).